We begin with the raw amino-acid sequence, 450 residues long: Signal recognition particle 54 kDa protein (450 aa).

Residues Gly-107 to Thr-114, Asp-188 to Arg-192, and Thr-247 to Asp-250 each bind GTP.

Belongs to the GTP-binding SRP family. SRP54 subfamily. In terms of assembly, part of the signal recognition particle protein translocation system, which is composed of SRP and FtsY. Archaeal SRP consists of a 7S RNA molecule of 300 nucleotides and two protein subunits: SRP54 and SRP19.

The protein localises to the cytoplasm. The enzyme catalyses GTP + H2O = GDP + phosphate + H(+). Its function is as follows. Involved in targeting and insertion of nascent membrane proteins into the cytoplasmic membrane. Binds to the hydrophobic signal sequence of the ribosome-nascent chain (RNC) as it emerges from the ribosomes. The SRP-RNC complex is then targeted to the cytoplasmic membrane where it interacts with the SRP receptor FtsY. The sequence is that of Signal recognition particle 54 kDa protein from Methanococcus maripaludis (strain C6 / ATCC BAA-1332).